Here is a 193-residue protein sequence, read N- to C-terminus: Zinc finger protein 740 (193 aa).

The tract at residues 33 to 75 is disordered; the sequence is SKQAENGERAGSPDVLRCSSQGHRKDSDKSRSRKDDDSLSEAS. Lysine 34 participates in a covalent cross-link: Glycyl lysine isopeptide (Lys-Gly) (interchain with G-Cter in SUMO2). Position 44 is a phosphoserine (serine 44). Residues 55–69 are compositionally biased toward basic and acidic residues; it reads HRKDSDKSRSRKDDD. 2 consecutive C2H2-type zinc fingers follow at residues 101–123 and 129–151; these read FVCEHCFGAFRSSYHLKRHILIH and FECDICDMRFIQKYHLERHKRVH. Residues 157–179 form a C2H2-type 3; atypical zinc finger; the sequence is YQCERCHQCFSRTDRLLRHKRMC.

The protein belongs to the krueppel C2H2-type zinc-finger protein family.

Its subcellular location is the nucleus. May be involved in transcriptional regulation. The protein is Zinc finger protein 740 (ZNF740) of Homo sapiens (Human).